Consider the following 462-residue polypeptide: Argininosuccinate lyase (462 aa).

This sequence belongs to the lyase 1 family. Argininosuccinate lyase subfamily.

Its subcellular location is the cytoplasm. The catalysed reaction is 2-(N(omega)-L-arginino)succinate = fumarate + L-arginine. It participates in amino-acid biosynthesis; L-arginine biosynthesis; L-arginine from L-ornithine and carbamoyl phosphate: step 3/3. The chain is Argininosuccinate lyase from Caldicellulosiruptor saccharolyticus (strain ATCC 43494 / DSM 8903 / Tp8T 6331).